The chain runs to 540 residues: Glucose-6-phosphate isomerase (540 aa).

E350 functions as the Proton donor in the catalytic mechanism. Catalysis depends on residues H381 and K503.

This sequence belongs to the GPI family.

Its subcellular location is the cytoplasm. The enzyme catalyses alpha-D-glucose 6-phosphate = beta-D-fructose 6-phosphate. It functions in the pathway carbohydrate biosynthesis; gluconeogenesis. Its pathway is carbohydrate degradation; glycolysis; D-glyceraldehyde 3-phosphate and glycerone phosphate from D-glucose: step 2/4. In terms of biological role, catalyzes the reversible isomerization of glucose-6-phosphate to fructose-6-phosphate. This chain is Glucose-6-phosphate isomerase, found in Paraburkholderia phytofirmans (strain DSM 17436 / LMG 22146 / PsJN) (Burkholderia phytofirmans).